The primary structure comprises 187 residues: UPF0301 protein YqgE (187 aa).

The protein belongs to the UPF0301 (AlgH) family.

In Salmonella paratyphi B (strain ATCC BAA-1250 / SPB7), this protein is UPF0301 protein YqgE.